A 612-amino-acid chain; its full sequence is C4-dicarboxylate transport sensor protein DctB (612 aa).

2 helical membrane-spanning segments follow: residues 23-43 (SLVILALLLAPLLWPLQYFAE) and 292-312 (VLLIGGATLLALLLLLTLLTL). Residues 328-376 (KRQLEERVLERTRELENANAQLQQEVHEREQAQRELMRAQDEVVQAGKL) adopt a coiled-coil conformation. The Histidine kinase domain maps to 385-599 (SISHELNQPL…VVRLHLLPGV (215 aa)). H388 is subject to Phosphohistidine; by autocatalysis.

In terms of processing, autophosphorylated.

It is found in the cell inner membrane. It catalyses the reaction ATP + protein L-histidine = ADP + protein N-phospho-L-histidine.. In terms of biological role, member of the two-component regulatory system DctB/DctD, which regulates C4-dicarboxylate transport via regulation of expression of the dctPQM operon and dctA. DctB functions as a membrane-associated protein kinase that phosphorylates DctD in response to environmental signals. The polypeptide is C4-dicarboxylate transport sensor protein DctB (Pseudomonas aeruginosa (strain ATCC 15692 / DSM 22644 / CIP 104116 / JCM 14847 / LMG 12228 / 1C / PRS 101 / PAO1)).